We begin with the raw amino-acid sequence, 210 residues long: Thiamine-phosphate synthase (210 aa).

4-amino-2-methyl-5-(diphosphooxymethyl)pyrimidine contacts are provided by residues 39–43 (QLREK) and Asn71. Residues Asp72 and Asp91 each coordinate Mg(2+). A 4-amino-2-methyl-5-(diphosphooxymethyl)pyrimidine-binding site is contributed by Ser110. Position 134–136 (134–136 (TPT)) interacts with 2-[(2R,5Z)-2-carboxy-4-methylthiazol-5(2H)-ylidene]ethyl phosphate. Lys137 serves as a coordination point for 4-amino-2-methyl-5-(diphosphooxymethyl)pyrimidine. A 2-[(2R,5Z)-2-carboxy-4-methylthiazol-5(2H)-ylidene]ethyl phosphate-binding site is contributed by Gly163.

This sequence belongs to the thiamine-phosphate synthase family. Requires Mg(2+) as cofactor.

It carries out the reaction 2-[(2R,5Z)-2-carboxy-4-methylthiazol-5(2H)-ylidene]ethyl phosphate + 4-amino-2-methyl-5-(diphosphooxymethyl)pyrimidine + 2 H(+) = thiamine phosphate + CO2 + diphosphate. The enzyme catalyses 2-(2-carboxy-4-methylthiazol-5-yl)ethyl phosphate + 4-amino-2-methyl-5-(diphosphooxymethyl)pyrimidine + 2 H(+) = thiamine phosphate + CO2 + diphosphate. The catalysed reaction is 4-methyl-5-(2-phosphooxyethyl)-thiazole + 4-amino-2-methyl-5-(diphosphooxymethyl)pyrimidine + H(+) = thiamine phosphate + diphosphate. The protein operates within cofactor biosynthesis; thiamine diphosphate biosynthesis; thiamine phosphate from 4-amino-2-methyl-5-diphosphomethylpyrimidine and 4-methyl-5-(2-phosphoethyl)-thiazole: step 1/1. In terms of biological role, condenses 4-methyl-5-(beta-hydroxyethyl)thiazole monophosphate (THZ-P) and 2-methyl-4-amino-5-hydroxymethyl pyrimidine pyrophosphate (HMP-PP) to form thiamine monophosphate (TMP). The protein is Thiamine-phosphate synthase of Campylobacter jejuni subsp. jejuni serotype O:6 (strain 81116 / NCTC 11828).